The chain runs to 363 residues: MLDNMQFHSPAPEHPQLNGGINKIPASHKIGYKLNQQVQRLAVVRNNIEERLNSMESSHGQISDSSVVRAIDASIDDFLIPSPPLSPKLRQCPIISQPQLVNVESDHRELIMLTPVWEAGLNSQKYNHNTRNFLSQYSFFRDMKTTKRIPNKENRKLKVVKSVVNSEALPKRRRYDRKIKRRSRELYEDDGNRSENYDEESAQEVPVRSVTPIRQVKRSLHTISSPLASQGVVNNVPKYIPSMSWEKLPDYSPPLHTLPNSNNKVLKVEWKGSPMDLNHDPLKQRLHPAELVLAQILRLPCDLYLDSKRRFFLEKVHRFKKGLPFRRTDAQKACRIDVNKASRLFAAFEKVGWLQDKHFEKYL.

2 disordered regions span residues Met1–Asn22 and Leu186–Arg208. The segment covering Leu186–Asn196 has biased composition (basic and acidic residues). The 98-residue stretch at Leu266 to Leu363 folds into the SWIRM domain.

The chain is SWIRM domain-containing protein YOR338W from Saccharomyces cerevisiae (strain ATCC 204508 / S288c) (Baker's yeast).